The following is a 910-amino-acid chain: Protein translocase subunit SecA (910 aa).

Residues glutamine 89, 107–111 (GEGKT), and aspartate 502 contribute to the ATP site. Zn(2+) contacts are provided by cysteine 894, cysteine 896, cysteine 905, and histidine 906.

This sequence belongs to the SecA family. Monomer and homodimer. Part of the essential Sec protein translocation apparatus which comprises SecA, SecYEG and auxiliary proteins SecDF-YajC and YidC. Zn(2+) is required as a cofactor.

It localises to the cell inner membrane. It is found in the cytoplasm. It catalyses the reaction ATP + H2O + cellular proteinSide 1 = ADP + phosphate + cellular proteinSide 2.. Functionally, part of the Sec protein translocase complex. Interacts with the SecYEG preprotein conducting channel. Has a central role in coupling the hydrolysis of ATP to the transfer of proteins into and across the cell membrane, serving both as a receptor for the preprotein-SecB complex and as an ATP-driven molecular motor driving the stepwise translocation of polypeptide chains across the membrane. This Chelativorans sp. (strain BNC1) protein is Protein translocase subunit SecA.